Consider the following 469-residue polypeptide: Phosphoglucosamine mutase (469 aa).

Residue Ser-117 is the Phosphoserine intermediate of the active site. 4 residues coordinate Mg(2+): Ser-117, Asp-263, Asp-265, and Asp-267. Residue Ser-117 is modified to Phosphoserine.

The protein belongs to the phosphohexose mutase family. The cofactor is Mg(2+). Activated by phosphorylation.

It catalyses the reaction alpha-D-glucosamine 1-phosphate = D-glucosamine 6-phosphate. Functionally, catalyzes the conversion of glucosamine-6-phosphate to glucosamine-1-phosphate. The sequence is that of Phosphoglucosamine mutase from Anaeromyxobacter sp. (strain Fw109-5).